The chain runs to 138 residues: Envelope glycoprotein N (138 aa).

Residues 1-21 (MEWNTLVLGLLVLSVVAESSG) form the signal peptide. Over 22–101 (NNSSTSTSAT…SHMYELSLSS (80 aa)) the chain is Virion surface. Residues 102–122 (FAAWWTMLNALILMGAFCIVL) form a helical membrane-spanning segment. The Intravirion segment spans residues 123–138 (RHCCFQNFTATTTKGY).

This sequence belongs to the herpesviridae glycoprotein N family. Interacts (via N-terminus) with gM (via N-terminus). The gM-gN heterodimer forms the gCII complex. O-glycosylated.

It localises to the virion membrane. The protein localises to the host membrane. Its subcellular location is the host Golgi apparatus. The protein resides in the host trans-Golgi network. In terms of biological role, envelope glycoprotein necessary for proper maturation of gM and modulation of its membrane fusion activity. Also plays a critical role in virion morphogenesis. The polypeptide is Envelope glycoprotein N (Human cytomegalovirus (strain AD169) (HHV-5)).